Reading from the N-terminus, the 78-residue chain is Translational regulator CsrA (78 aa).

Belongs to the CsrA/RsmA family. In terms of assembly, homodimer; the beta-strands of each monomer intercalate to form a hydrophobic core, while the alpha-helices form wings that extend away from the core.

The protein localises to the cytoplasm. Functionally, a translational regulator that binds mRNA to regulate translation initiation and/or mRNA stability. Usually binds in the 5'-UTR at or near the Shine-Dalgarno sequence preventing ribosome-binding, thus repressing translation. Its main target seems to be the major flagellin gene, while its function is anatagonized by FliW. This Borrelia turicatae (strain 91E135) protein is Translational regulator CsrA.